We begin with the raw amino-acid sequence, 77 residues long: Putative sulfur carrier protein AF_0188 (77 aa).

C11 functions as the Cysteine persulfide intermediate in the catalytic mechanism.

The protein belongs to the sulfur carrier protein TusA family.

The chain is Putative sulfur carrier protein AF_0188 from Archaeoglobus fulgidus (strain ATCC 49558 / DSM 4304 / JCM 9628 / NBRC 100126 / VC-16).